A 334-amino-acid chain; its full sequence is HTH-type transcriptional repressor PurR (334 aa).

An HTH lacI-type domain is found at Ala2 to Cys56. A DNA-binding region (H-T-H motif) is located at residues Ile4–Asn23. The DNA-binding element occupies Ser48–Cys56. The hypoxanthine site is built by Phe73, Lys189, Phe220, and Asp274.

Homodimer.

It participates in purine metabolism; purine nucleotide biosynthesis [regulation]. Functionally, is the main repressor of the genes involved in the de novo synthesis of purine nucleotides, regulating purB, purC, purEK, purF, purHD, purL, purMN and guaBA expression. PurR is allosterically activated to bind its cognate DNA by binding the purine corepressors, hypoxanthine or guanine, thereby effecting transcription repression. The chain is HTH-type transcriptional repressor PurR from Vibrio vulnificus (strain CMCP6).